The following is an 84-amino-acid chain: Antimicrobial peptide MeuNaTxbeta-2 (84 aa).

Positions 1–20 (MMKTVIVLIVFSLVMIVVKS) are cleaved as a signal peptide. The region spanning 21–83 (DNGYLLDKYT…LWHYETNRCR (63 aa)) is the LCN-type CS-alpha/beta domain. 4 disulfide bridges follow: C32-C82, C36-C57, C43-C64, and C47-C66.

In terms of tissue distribution, expressed by the venom gland.

The protein resides in the secreted. Its function is as follows. Antimicrobial peptide with activity against both Gram-positive and -negative bacteria. The polypeptide is Antimicrobial peptide MeuNaTxbeta-2 (Mesobuthus eupeus (Lesser Asian scorpion)).